The primary structure comprises 147 residues: Phosphoribosyl-AMP cyclohydrolase (147 aa).

D91 is a binding site for Mg(2+). C92 contacts Zn(2+). Mg(2+)-binding residues include D93 and D95. The Zn(2+) site is built by C109 and C116.

This sequence belongs to the PRA-CH family. As to quaternary structure, homodimer. Requires Mg(2+) as cofactor. Zn(2+) serves as cofactor.

The protein resides in the cytoplasm. It catalyses the reaction 1-(5-phospho-beta-D-ribosyl)-5'-AMP + H2O = 1-(5-phospho-beta-D-ribosyl)-5-[(5-phospho-beta-D-ribosylamino)methylideneamino]imidazole-4-carboxamide. It functions in the pathway amino-acid biosynthesis; L-histidine biosynthesis; L-histidine from 5-phospho-alpha-D-ribose 1-diphosphate: step 3/9. Catalyzes the hydrolysis of the adenine ring of phosphoribosyl-AMP. The polypeptide is Phosphoribosyl-AMP cyclohydrolase (Rhodopseudomonas palustris (strain BisB18)).